The chain runs to 483 residues: Regulatory protein ViaA (483 aa).

The protein belongs to the ViaA family. Homodimer. Interacts with RavA.

The protein localises to the cytoplasm. Its function is as follows. Component of the RavA-ViaA chaperone complex, which may act on the membrane to optimize the function of some of the respiratory chains. ViaA stimulates the ATPase activity of RavA. The protein is Regulatory protein ViaA of Escherichia coli (strain SMS-3-5 / SECEC).